Here is a 355-residue protein sequence, read N- to C-terminus: MTTNSSFFDEHIAMIYSNLMDQYMPEYFKSFEYTPWVFSLLGSVVIGLSGIFPLIIIPTEEKMAKEGYKDPADSKLLRVLLSFAVGGLLGDVFLHLLPEAWEGDNQDPSSHPSLRSGLWVLSGILIFTIVEKIFSGYASADEENPQPKCVEIANCLLRRHGGQLPEGETSESCGGACDIEDVGKVCFLREQEQKSKERKEQPKKVAGYLNLLANSIDNFTHGLAVAGSFLVSFRHGILATFAILLHEIPHEVGDFAILLRSGFSRWDAARAQLLTAGAGLLGALVAIGGSGVTSAMEARTSWIMPFTAGGFLHIALVTVLPDLLKEEERKESIKQLLALVFGIALMAVMTMLFEH.

Residue Asn-4 is glycosylated (N-linked (GlcNAc...) asparagine). 3 consecutive transmembrane segments (helical) span residues Val-37–Ile-57, Val-79–Glu-99, and Leu-118–Ala-138. Residue Asn-218 is glycosylated (N-linked (GlcNAc...) asparagine). The next 2 membrane-spanning stretches (helical) occupy residues Leu-273–Thr-293 and Ser-301–Pro-321.

It belongs to the ZIP transporter (TC 2.A.5) family. KE4/Catsup subfamily.

The protein localises to the basolateral cell membrane. It localises to the golgi apparatus membrane. Functionally, involved in zinc transport and homeostasis. In Drosophila melanogaster (Fruit fly), this protein is Zinc transporter ZIP13 homolog (Zip99C).